The chain runs to 293 residues: Nucleotide-binding protein BcerKBAB4_4948 (293 aa).

Glycine 14–threonine 21 is an ATP binding site. Aspartate 65 to glycine 68 is a GTP binding site.

The protein belongs to the RapZ-like family.

Its function is as follows. Displays ATPase and GTPase activities. The chain is Nucleotide-binding protein BcerKBAB4_4948 from Bacillus mycoides (strain KBAB4) (Bacillus weihenstephanensis).